The sequence spans 562 residues: Dihydroxy-acid dehydratase (562 aa).

Asp80 contacts Mg(2+). Cys121 contacts [2Fe-2S] cluster. Mg(2+) contacts are provided by Asp122 and Lys123. Lys123 is modified (N6-carboxylysine). [2Fe-2S] cluster is bound at residue Cys194. A Mg(2+)-binding site is contributed by Glu446. The Proton acceptor role is filled by Ser472.

This sequence belongs to the IlvD/Edd family. Homodimer. The cofactor is [2Fe-2S] cluster. Mg(2+) is required as a cofactor.

It catalyses the reaction (2R)-2,3-dihydroxy-3-methylbutanoate = 3-methyl-2-oxobutanoate + H2O. The enzyme catalyses (2R,3R)-2,3-dihydroxy-3-methylpentanoate = (S)-3-methyl-2-oxopentanoate + H2O. Its pathway is amino-acid biosynthesis; L-isoleucine biosynthesis; L-isoleucine from 2-oxobutanoate: step 3/4. It participates in amino-acid biosynthesis; L-valine biosynthesis; L-valine from pyruvate: step 3/4. Functions in the biosynthesis of branched-chain amino acids. Catalyzes the dehydration of (2R,3R)-2,3-dihydroxy-3-methylpentanoate (2,3-dihydroxy-3-methylvalerate) into 2-oxo-3-methylpentanoate (2-oxo-3-methylvalerate) and of (2R)-2,3-dihydroxy-3-methylbutanoate (2,3-dihydroxyisovalerate) into 2-oxo-3-methylbutanoate (2-oxoisovalerate), the penultimate precursor to L-isoleucine and L-valine, respectively. In Staphylococcus haemolyticus (strain JCSC1435), this protein is Dihydroxy-acid dehydratase.